Here is a 97-residue protein sequence, read N- to C-terminus: Small ribosomal subunit protein bS16c (97 aa).

The protein belongs to the bacterial ribosomal protein bS16 family.

The protein resides in the plastid. It localises to the chloroplast. In Piper cenocladum (Ant piper), this protein is Small ribosomal subunit protein bS16c.